Consider the following 626-residue polypeptide: Dual specificity testis-specific protein kinase 1 (626 aa).

The disordered stretch occupies residues 1–41 (MAGERPPLRGPGPGPGEVPGEGPPGPGGTGGGPGRGRPSSY). Positions 8-26 (LRGPGPGPGEVPGEGPPGP) are enriched in pro residues. Positions 57 to 314 (FHCAEKIGAG…TEITQHLEWI (258 aa)) constitute a Protein kinase domain. Residues 63–71 (IGAGFFSEV) and K86 each bind ATP. D175 functions as the Proton acceptor in the catalytic mechanism. S220 is subject to Phosphoserine; by autocatalysis. Disordered regions lie at residues 331-373 (HNQG…NWGD), 423-488 (ETLV…QLPL), and 529-564 (WAGE…EPDE). R338 carries the post-translational modification Omega-N-methylarginine. Positions 348–357 (PDPRLSRSRS) are enriched in basic and acidic residues. The tract at residues 419–524 (VTTPETLVQP…NNNPPAVVVN (106 aa)) is required for interaction with YWHAB. Pro residues predominate over residues 476 to 485 (EPEPPGPAPQ). The segment at 527-624 (QGWAGEPWNR…PTPSLQLPGA (98 aa)) is required for interaction with PARVA. The interval 527–626 (QGWAGEPWNR…PSLQLPGARS (100 aa)) is required for interaction with SPRED1 and SPRY2. Required for TESK1-mediated dephosphorylation of SPRY2 and SPRY2 inhibition of ERK phosphorylation.

The protein belongs to the protein kinase superfamily. TKL Ser/Thr protein kinase family. Interacts (via both C- and N-termini) with SPRY4 (via C-terminus); the interaction inhibits TESK1 kinase activity. Interacts with TAOK1; the interaction inhibits TAOK1 kinase activity. Interacts (via C-terminus) with SPRED1 (via C-terminus); the interaction inhibits TESK1 kinase activity. Interacts (via C-terminus) with PARVA/PARVIN (via C-terminus); the interaction inhibits TESK1 kinase activity. Interacts with YWHAB/14-3-3 beta; the interaction is dependent on the phosphorylation of TESK1 Ser-437 and inhibits TESK1 kinase activity. Interacts with SPRY1, SPRY3 and SPRED2. Interacts (via C-terminus) with SPRY2 (via C-terminus); the interaction disrupts SPRY2 interaction with PPP2CA/PP2A-C, possibly by vesicular sequestration of SPRY2. Therefore dephosphorylation of SPRY2 by the serine/threonine-protein phosphatase 2A (PP2A) holoenzyme is lost, inhibiting its interaction with GRB2. Mg(2+) is required as a cofactor. The cofactor is Mn(2+). Post-translationally, autophosphorylated on serine and tyrosine residues. In terms of tissue distribution, expressed in podocytes and renal tubular cells in the kidney (at protein level).

The protein localises to the cytoplasm. It localises to the perinuclear region. Its subcellular location is the cytoskeleton. The protein resides in the microtubule organizing center. It is found in the centrosome. The protein localises to the cell projection. It localises to the lamellipodium. It carries out the reaction L-seryl-[protein] + ATP = O-phospho-L-seryl-[protein] + ADP + H(+). The enzyme catalyses L-threonyl-[protein] + ATP = O-phospho-L-threonyl-[protein] + ADP + H(+). It catalyses the reaction L-tyrosyl-[protein] + ATP = O-phospho-L-tyrosyl-[protein] + ADP + H(+). With respect to regulation, activated by autophosphorylation on Ser-220. Kinase activity is inhibited by SPRED1. Dual specificity protein kinase activity catalyzing autophosphorylation and phosphorylation of exogenous substrates on both serine/threonine and tyrosine residues. Regulates the cellular cytoskeleton by enhancing actin stress fiber formation via phosphorylation of cofilin and by preventing microtubule breakdown via inhibition of TAOK1/MARKK kinase activity. Inhibits podocyte motility via regulation of actin cytoskeletal dynamics and phosphorylation of CFL1. Positively regulates integrin-mediated cell spreading, via phosphorylation of cofilin. Suppresses ciliogenesis via multiple pathways; phosphorylation of CFL1, suppression of ciliary vesicle directional trafficking to the ciliary base, and by facilitating YAP1 nuclear localization where it acts as a transcriptional corepressor of the TEAD4 target genes AURKA and PLK1. Probably plays a central role at and after the meiotic phase of spermatogenesis. This Homo sapiens (Human) protein is Dual specificity testis-specific protein kinase 1 (TESK1).